Reading from the N-terminus, the 335-residue chain is Tumor necrosis factor receptor superfamily member 6 (335 aa).

An N-terminal signal peptide occupies residues 1–25 (MLGIWTLLPLVLTSVARLSSKSVNA). The Extracellular segment spans residues 26–173 (QVTDINSKGL…KCKEEGSRSN (148 aa)). Thr-28 is a glycosylation site (O-linked (GalNAc...) threonine). 3 TNFR-Cys repeats span residues 47–83 (QNLE…PDCV), 84–127 (PCQE…NTKC), and 128–166 (RCKP…TKCK). 8 disulfide bridges follow: Cys-59–Cys-73, Cys-63–Cys-82, Cys-85–Cys-101, Cys-104–Cys-119, Cys-107–Cys-127, Cys-129–Cys-143, Cys-146–Cys-157, and Cys-149–Cys-165. Asn-118 and Asn-136 each carry an N-linked (GlcNAc...) asparagine glycan. Residues 174-190 (LGWLCLLLLPIPLIVWV) form a helical membrane-spanning segment. Residues 191 to 335 (KRKEVQKTCR…NFRNEIQSLV (145 aa)) are Cytoplasmic-facing. Cys-199 carries the S-palmitoyl cysteine lipid modification. Residue Ser-209 is modified to Phosphoserine. The interval 212 to 317 (SPTLNPETVA…EKIQTIILKD (106 aa)) is interaction with HIPK3. A Phosphothreonine modification is found at Thr-214. A Phosphoserine modification is found at Ser-225. The tract at residues 230-254 (SKYITTIAGVMTLSQVKGFVRKNGV) is interaction with CALM. In terms of domain architecture, Death spans 230–314 (SKYITTIAGV…TLAEKIQTII (85 aa)). Arg-250 carries (Microbial infection) N-beta-linked (GlcNAc) arginine glycosylation.

Component of the death-induced signaling complex (DISC) composed of cell surface receptor FAS/CD95, adapter protein FADD and the CASP8 protease; recruitment of CASP8 to the complex is required for processing of CASP8 into the p18 and p10 subunits. Interacts directly (via DED domain) with NOL3 (via CARD domain); inhibits death-inducing signaling complex (DISC) assembly by inhibiting the increase in FAS-FADD binding induced by FAS activation. Binds DAXX. Interacts with HIPK3. Part of a complex containing HIPK3 and FADD. Binds RIPK1 and FAIM2. Interacts with BABAM2 and FEM1B. Interacts with CALM. In the absence of stimulation, interacts with BIRC2, DDX3X and GSK3B. The interaction with BIRC2 and DDX3X is further enhanced upon receptor stimulation and accompanied by DDX3X and BIRC2 cleavage. In terms of processing, (Microbial infection) Glycosylated at Arg-250 by enteropathogenic E.coli protein NleB1: arginine GlcNAcylation prevents homotypic/heterotypic death domain interactions. Palmitoylated. Palmitoylation by ZDHHC7 prevents the lysosomal degradation of FAS regulating its expression at the plasma membrane. Post-translationally, N- and O-glycosylated. O-glycosylated with core 1 or possibly core 8 glycans. As to expression, isoform 1 and isoform 6 are expressed at equal levels in resting peripheral blood mononuclear cells. After activation there is an increase in isoform 1 and decrease in the levels of isoform 6.

The protein localises to the cell membrane. The protein resides in the membrane raft. Its subcellular location is the secreted. Receptor for TNFSF6/FASLG. The adapter molecule FADD recruits caspase CASP8 to the activated receptor. The resulting death-inducing signaling complex (DISC) performs CASP8 proteolytic activation which initiates the subsequent cascade of caspases (aspartate-specific cysteine proteases) mediating apoptosis. FAS-mediated apoptosis may have a role in the induction of peripheral tolerance, in the antigen-stimulated suicide of mature T-cells, or both. The secreted isoforms 2 to 6 block apoptosis (in vitro). This is Tumor necrosis factor receptor superfamily member 6 (FAS) from Homo sapiens (Human).